The chain runs to 313 residues: Protoheme IX farnesyltransferase (313 aa).

Transmembrane regions (helical) follow at residues 32 to 52, 53 to 73, 120 to 140, 153 to 173, 180 to 200, 226 to 246, 248 to 268, and 284 to 304; these read VMSLVVFTALVGMLLAPGDFH, PVLAITAMLCIAVGGGAAGAL, ILVNWVAGALLAFTIFFYVVI, IVIGGAAGALPPVVAWAAVTG, LLLFAIIFFWTPPHFWALALF, ILLYTIVLVAVAAAPWPLGYF, AIYGVASLALGGWMLVLALRV, and LFKFSILYLFALFSILLLEVV.

It belongs to the UbiA prenyltransferase family. Protoheme IX farnesyltransferase subfamily.

The protein localises to the cell inner membrane. It catalyses the reaction heme b + (2E,6E)-farnesyl diphosphate + H2O = Fe(II)-heme o + diphosphate. The protein operates within porphyrin-containing compound metabolism; heme O biosynthesis; heme O from protoheme: step 1/1. Converts heme B (protoheme IX) to heme O by substitution of the vinyl group on carbon 2 of heme B porphyrin ring with a hydroxyethyl farnesyl side group. The chain is Protoheme IX farnesyltransferase from Rhodopseudomonas palustris (strain HaA2).